Reading from the N-terminus, the 383-residue chain is Acetylornithine deacetylase (383 aa).

A Zn(2+)-binding site is contributed by H80. Residue D82 is part of the active site. Residue D112 participates in Zn(2+) binding. E144 is a catalytic residue. Zn(2+) contacts are provided by E145, E169, and H355.

The protein belongs to the peptidase M20A family. ArgE subfamily. In terms of assembly, homodimer. The cofactor is Zn(2+). Co(2+) serves as cofactor. Glutathione is required as a cofactor.

Its subcellular location is the cytoplasm. It carries out the reaction N(2)-acetyl-L-ornithine + H2O = L-ornithine + acetate. It functions in the pathway amino-acid biosynthesis; L-arginine biosynthesis; L-ornithine from N(2)-acetyl-L-ornithine (linear): step 1/1. Its function is as follows. Catalyzes the hydrolysis of the amide bond of N(2)-acetylated L-amino acids. Cleaves the acetyl group from N-acetyl-L-ornithine to form L-ornithine, an intermediate in L-arginine biosynthesis pathway, and a branchpoint in the synthesis of polyamines. This Salmonella agona (strain SL483) protein is Acetylornithine deacetylase.